A 446-amino-acid polypeptide reads, in one-letter code: Maturase K (446 aa).

The protein belongs to the intron maturase 2 family. MatK subfamily.

It is found in the plastid. The protein resides in the chloroplast. Usually encoded in the trnK tRNA gene intron. Probably assists in splicing its own and other chloroplast group II introns. The sequence is that of Maturase K from Phalaenopsis aphrodite subsp. formosana (Moth orchid).